The following is a 78-amino-acid chain: Large ribosomal subunit protein bL28 (78 aa).

This sequence belongs to the bacterial ribosomal protein bL28 family.

The protein is Large ribosomal subunit protein bL28 of Thioalkalivibrio sulfidiphilus (strain HL-EbGR7).